A 462-amino-acid chain; its full sequence is Elongation factor 1-alpha (462 aa).

Position 2 is a n,N,N-trimethylglycine (G2). K3 carries the N6,N6-dimethyllysine; alternate modification. K3 carries the post-translational modification N6-methyllysine; alternate. The tr-type G domain occupies 5–242 (KAHVNVVVIG…DAIEPPVRPS (238 aa)). A G1 region spans residues 14 to 21 (GHVDSGKS). 14–21 (GHVDSGKS) provides a ligand contact to GTP. K30 is modified (N6-methyllysine). The tract at residues 70–74 (GITID) is G2. K79 carries the post-translational modification N6,N6,N6-trimethyllysine. Positions 91 to 94 (DAPG) are G3. GTP is bound by residues 91–95 (DAPGH) and 153–156 (NKMD). Positions 153 to 156 (NKMD) are G4. The segment at 192–194 (SGW) is G5. The residue at position 318 (K318) is an N6,N6-dimethyllysine; alternate. An N6-methyllysine; alternate modification is found at K318. An N6-methyllysine modification is found at K392.

Belongs to the TRAFAC class translation factor GTPase superfamily. Classic translation factor GTPase family. EF-Tu/EF-1A subfamily.

The protein resides in the cytoplasm. Its function is as follows. This protein promotes the GTP-dependent binding of aminoacyl-tRNA to the A-site of ribosomes during protein biosynthesis. In Serendipita indica (Root endophyte fungus), this protein is Elongation factor 1-alpha (TEF1).